Consider the following 587-residue polypeptide: UDP-N-acetylmuramoylalanine--D-glutamate ligase (587 aa).

The segment at 124 to 147 is disordered; it reads DHLVPPESPLSDASDISDASDATD. Over residues 132 to 147 the composition is skewed to low complexity; sequence PLSDASDISDASDATD. 214 to 220 is an ATP binding site; the sequence is GTNGKTT.

It belongs to the MurCDEF family.

Its subcellular location is the cytoplasm. The enzyme catalyses UDP-N-acetyl-alpha-D-muramoyl-L-alanine + D-glutamate + ATP = UDP-N-acetyl-alpha-D-muramoyl-L-alanyl-D-glutamate + ADP + phosphate + H(+). It participates in cell wall biogenesis; peptidoglycan biosynthesis. Functionally, cell wall formation. Catalyzes the addition of glutamate to the nucleotide precursor UDP-N-acetylmuramoyl-L-alanine (UMA). In Polaromonas sp. (strain JS666 / ATCC BAA-500), this protein is UDP-N-acetylmuramoylalanine--D-glutamate ligase.